Reading from the N-terminus, the 318-residue chain is Methionyl-tRNA formyltransferase (318 aa).

112 to 115 contributes to the (6S)-5,6,7,8-tetrahydrofolate binding site; sequence SILP.

Belongs to the Fmt family.

It carries out the reaction L-methionyl-tRNA(fMet) + (6R)-10-formyltetrahydrofolate = N-formyl-L-methionyl-tRNA(fMet) + (6S)-5,6,7,8-tetrahydrofolate + H(+). Attaches a formyl group to the free amino group of methionyl-tRNA(fMet). The formyl group appears to play a dual role in the initiator identity of N-formylmethionyl-tRNA by promoting its recognition by IF2 and preventing the misappropriation of this tRNA by the elongation apparatus. This Haemophilus influenzae (strain PittGG) protein is Methionyl-tRNA formyltransferase.